Here is a 667-residue protein sequence, read N- to C-terminus: MYDPARDSWEERDGDEARSLRGRLASDQPHAGFSSSEQIYGASGENNNTTDLQHPGPDPKTTASAKVLYAESPPAQSTTQTPPSISTHVQSPVNPAAQEASNTQSLTSAAQNQSNKSTTTMDNTSGSATPKPRADPSDKSNRPDQVASPTDQNGSQGDKKRKVPAEENASEKSQPTPDRPVSKRKRMEERHQKLRKRGRTPPSAYSRRDADETASAADRNGPTYRSTSPLPPPRSPTPEDQPRQRKRPGGGARMGLVDRETLRRRQEERERAQVEEAMRASQGRGLADVVRQHYNAVPQRGREWRKTESKIKGLRSFNNWIKSTLIQKFSPDEEFLARFNGTKDWAEDGGVPPVEEKRLLVIDLGCGKGGDLLKWQLAPQPVDLYVGLDPAEVSIVQARERYNGMKSGRGNRGRRNPIFHAEFQPKDCFGEWLGDVDIVQQVGIDPNVGPGGSVMSSRWGGGGFDVVASMFTIHYAFESEEKARQMLRNVAGCLKKGGRFLGVCPNSDVISARVSEINAKKKERQSQAKKEKTDEAPEDGEVEEDDGKVEWGNQIYRVRFPVTTPEDGIFRPPFGWKYSYFMEEAVEEVPEYVVPWEAFRALTEDYNLELQYRKPFLDIWRDEKDDPELGPLSERMGVRDRATGELLMTEEEKEAASFYHAFCFYKV.

The segment covering 1–19 (MYDPARDSWEERDGDEARS) has biased composition (basic and acidic residues). The disordered stretch occupies residues 1–272 (MYDPARDSWE…RRRQEERERA (272 aa)). The span at 33–52 (FSSSEQIYGASGENNNTTDL) shows a compositional bias: polar residues. Over residues 72-87 (SPPAQSTTQTPPSIST) the composition is skewed to low complexity. A compositionally biased stretch (polar residues) spans 88–128 (HVQSPVNPAAQEASNTQSLTSAAQNQSNKSTTTMDNTSGSA). The segment covering 132–142 (PRADPSDKSNR) has biased composition (basic and acidic residues). Polar residues predominate over residues 147–156 (ASPTDQNGSQ). Residues 256-272 (LVDRETLRRRQEERERA) show a composition bias toward basic and acidic residues. The mRNA cap 0 methyltransferase domain occupies 309–667 (SKIKGLRSFN…FYHAFCFYKV (359 aa)). An mRNA-binding site is contributed by 318–319 (NN). Residues Lys322, Gly365, Asp389, Asp427, 470–472 (MFT), and Tyr475 contribute to the S-adenosyl-L-methionine site. The segment covering 521 to 535 (KKERQSQAKKEKTDE) has biased composition (basic and acidic residues). The segment at 521–547 (KKERQSQAKKEKTDEAPEDGEVEEDDG) is disordered. The segment covering 536 to 547 (APEDGEVEEDDG) has biased composition (acidic residues).

This sequence belongs to the class I-like SAM-binding methyltransferase superfamily. mRNA cap 0 methyltransferase family.

The protein resides in the nucleus. The catalysed reaction is a 5'-end (5'-triphosphoguanosine)-ribonucleoside in mRNA + S-adenosyl-L-methionine = a 5'-end (N(7)-methyl 5'-triphosphoguanosine)-ribonucleoside in mRNA + S-adenosyl-L-homocysteine. Responsible for methylating the 5'-cap structure of mRNAs. This chain is mRNA cap guanine-N(7) methyltransferase (abd1), found in Neosartorya fischeri (strain ATCC 1020 / DSM 3700 / CBS 544.65 / FGSC A1164 / JCM 1740 / NRRL 181 / WB 181) (Aspergillus fischerianus).